A 128-amino-acid polypeptide reads, in one-letter code: Glycine cleavage system H protein (128 aa).

Residues 24–106 (VATVGITAFA…YNNGWLLKIK (83 aa)) form the Lipoyl-binding domain. Lysine 65 carries the N6-lipoyllysine modification.

It belongs to the GcvH family. As to quaternary structure, the glycine cleavage system is composed of four proteins: P, T, L and H. Requires (R)-lipoate as cofactor.

Functionally, the glycine cleavage system catalyzes the degradation of glycine. The H protein shuttles the methylamine group of glycine from the P protein to the T protein. The sequence is that of Glycine cleavage system H protein from Acaryochloris marina (strain MBIC 11017).